Consider the following 612-residue polypeptide: BTB/POZ domain-containing protein 9 (612 aa).

The 69-residue stretch at 36–104 (GDVTFVVEKK…IYTGRATLTD (69 aa)) folds into the BTB domain. Residues 142–240 (VCMTFDVASL…SLTELLNVVR (99 aa)) form the BACK domain. The interval 560–612 (QSSQKEENSEESGTGDTSLAGQQLDSHALRAPSGSSLPSSPGSNSRSPNRQHQ) is disordered. Residues 573–584 (TGDTSLAGQQLD) show a composition bias toward polar residues. Low complexity predominate over residues 588–612 (LRAPSGSSLPSSPGSNSRSPNRQHQ).

As to expression, detected in the brain (at protein level). Moderately expressed in all specific brain regions examined. Expressed in the dopaminergic neurons of the substantia nigra and A11 neurons. Highly expressed in kidney and moderately expressed in all other adult and fetal tissues.

The sequence is that of BTB/POZ domain-containing protein 9 (BTBD9) from Homo sapiens (Human).